The sequence spans 203 residues: Small ribosomal subunit protein uS4c (203 aa).

A disordered region spans residues 17-39 (TLPGLTTKKSNKLNRPGKDGNTD). The S4 RNA-binding domain occupies 92-164 (MRLDTLCFTL…IKNNQVREIP (73 aa)).

It belongs to the universal ribosomal protein uS4 family. In terms of assembly, part of the 30S ribosomal subunit. Contacts protein S5. The interaction surface between S4 and S5 is involved in control of translational fidelity.

Its subcellular location is the plastid. The protein resides in the chloroplast. Functionally, one of the primary rRNA binding proteins, it binds directly to 16S rRNA where it nucleates assembly of the body of the 30S subunit. Its function is as follows. With S5 and S12 plays an important role in translational accuracy. The polypeptide is Small ribosomal subunit protein uS4c (rps4) (Phaeodactylum tricornutum (strain CCAP 1055/1)).